The primary structure comprises 228 residues: uncharacterized protein (228 aa).

The first 19 residues, 1–19, serve as a signal peptide directing secretion; sequence MYRYTWLLWWITILLRIQQ. Residues asparagine 41, asparagine 93, asparagine 100, asparagine 128, and asparagine 164 are each glycosylated (N-linked (GlcNAc...) asparagine; by host). Residues 189–209 form a helical membrane-spanning segment; it reads MWIIPLVIVTTIIVLICFKFP.

This sequence belongs to the HHV-5 UL9 family.

Its subcellular location is the host membrane. This is an uncharacterized protein from Homo sapiens (Human).